Consider the following 133-residue polypeptide: Triatox (133 aa).

The N-terminal stretch at 1 to 22 (MTTLRVLLAVCCAAYCILAEDV) is a signal peptide. The region spanning 23–125 (TVPANGELKL…RAMCTVYSAE (103 aa)) is the CUB domain. A disulfide bridge connects residues cysteine 70 and cysteine 86.

It belongs to the venom CUB family. In terms of tissue distribution, expressed by the venom gland.

The protein localises to the secreted. Its function is as follows. May function as an antimicrobial peptide and may be related to the innate defense of the insect in the salivary glands. This is Triatox from Triatoma infestans (Assassin bug).